The chain runs to 203 residues: N-(5'-phosphoribosyl)anthranilate isomerase (203 aa).

This sequence belongs to the TrpF family.

It catalyses the reaction N-(5-phospho-beta-D-ribosyl)anthranilate = 1-(2-carboxyphenylamino)-1-deoxy-D-ribulose 5-phosphate. It functions in the pathway amino-acid biosynthesis; L-tryptophan biosynthesis; L-tryptophan from chorismate: step 3/5. The protein is N-(5'-phosphoribosyl)anthranilate isomerase of Geotalea uraniireducens (strain Rf4) (Geobacter uraniireducens).